We begin with the raw amino-acid sequence, 215 residues long: MERNKLARQIIDTCLEMTRLGLNQGTAGNVSVRYQDGMLITPTGIPYEKLTESHIVFIDGNGKHEEGKLPSSEWRFHMAAYQSRPDANAVVHNHAVHCTAVSILNRPIPAIHYMIAAAGGNSIPCAPYATFGTRELSEHVALALKNRKATLLQHHGLIACEANLEKALWLAHEVEVLAQLYLTTLAITDPVPVLSDEEIAVVLEKFKTYGLRIEE.

Substrate is bound by residues 28–29, 43–44, and 71–72; these read GN, TG, and SS. The Proton donor/acceptor role is filled by E73. The Zn(2+) site is built by E73, H92, H94, and H155.

This sequence belongs to the aldolase class II family. AraD/FucA subfamily. As to quaternary structure, homotetramer. It depends on Zn(2+) as a cofactor.

It catalyses the reaction L-fuculose 1-phosphate = (S)-lactaldehyde + dihydroxyacetone phosphate. It participates in carbohydrate degradation; L-fucose degradation; L-lactaldehyde and glycerone phosphate from L-fucose: step 3/3. In terms of biological role, involved in the degradation of L-fucose and D-arabinose. Catalyzes the reversible cleavage of L-fuculose 1-phosphate (Fuc1P) to yield dihydroxyacetone phosphate (DHAP) and L-lactaldehyde. The chain is L-fuculose phosphate aldolase from Escherichia coli O6:H1 (strain CFT073 / ATCC 700928 / UPEC).